The following is a 288-amino-acid chain: Co-chaperone protein DjlA (288 aa).

At 1–6 the chain is on the periplasmic side; that stretch reads MEFIGK. The chain crosses the membrane as a helical span at residues 7–30; the sequence is IIGVFLGWKVGGFFGAIAGLILGS. At 31–288 the chain is on the cytoplasmic side; sequence IADKKLYELG…DLICKAKGWK (258 aa). One can recognise a J domain in the interval 222–288; the sequence is DAYKVLGVTE…DLICKAKGWK (67 aa).

As to quaternary structure, homodimer.

It is found in the cell inner membrane. Functionally, regulatory DnaK co-chaperone. Direct interaction between DnaK and DjlA is needed for the induction of the wcaABCDE operon, involved in the synthesis of a colanic acid polysaccharide capsule, possibly through activation of the RcsB/RcsC phosphotransfer signaling pathway. The colanic acid capsule may help the bacterium survive conditions outside the host. This Haemophilus influenzae (strain ATCC 51907 / DSM 11121 / KW20 / Rd) protein is Co-chaperone protein DjlA.